The primary structure comprises 211 residues: Thymidylate kinase (211 aa).

An ATP-binding site is contributed by 10-17 (GPDGAGKT).

This sequence belongs to the thymidylate kinase family.

The catalysed reaction is dTMP + ATP = dTDP + ADP. Its function is as follows. Phosphorylation of dTMP to form dTDP in both de novo and salvage pathways of dTTP synthesis. In Lactococcus lactis subsp. cremoris (strain SK11), this protein is Thymidylate kinase.